A 373-amino-acid polypeptide reads, in one-letter code: 3-isopropylmalate dehydrogenase (373 aa).

NAD(+) is bound at residue 82–93 (GPKWGTGAVRPE). The substrate site is built by R100, R110, R139, and D231. D231 and D260 together coordinate Mg(2+). Position 295–306 (295–306 (GSAPDLPENKVN)) interacts with NAD(+).

Belongs to the isocitrate and isopropylmalate dehydrogenases family. As to quaternary structure, homodimer. The cofactor is Mg(2+). Requires Mn(2+) as cofactor.

It localises to the cytoplasm. The catalysed reaction is (2R,3S)-3-isopropylmalate + NAD(+) = 4-methyl-2-oxopentanoate + CO2 + NADH. It participates in amino-acid biosynthesis; L-leucine biosynthesis; L-leucine from 3-methyl-2-oxobutanoate: step 3/4. Catalyzes the oxidation of 3-carboxy-2-hydroxy-4-methylpentanoate (3-isopropylmalate) to 3-carboxy-4-methyl-2-oxopentanoate. The product decarboxylates to 4-methyl-2 oxopentanoate. This Scheffersomyces stipitis (strain ATCC 58785 / CBS 6054 / NBRC 10063 / NRRL Y-11545) (Yeast) protein is 3-isopropylmalate dehydrogenase (LEU2).